Consider the following 103-residue polypeptide: MYAVFQSGGKQHRVAEGHTVRLEKLEVATGETVEFDQVLLIADGETVHVGAPLVAGGKVVAEVVGHGRGEKVTIIKFRRRKHHDKKMGHRQWFTEVKITAISA.

The protein belongs to the bacterial ribosomal protein bL21 family. In terms of assembly, part of the 50S ribosomal subunit. Contacts protein L20.

This protein binds to 23S rRNA in the presence of protein L20. The polypeptide is Large ribosomal subunit protein bL21 (Shewanella frigidimarina (strain NCIMB 400)).